The sequence spans 219 residues: Ribosomal RNA small subunit methyltransferase G (219 aa).

Residues G81, L86, and R150 each coordinate S-adenosyl-L-methionine.

The protein belongs to the methyltransferase superfamily. RNA methyltransferase RsmG family.

It localises to the cytoplasm. The catalysed reaction is guanosine(527) in 16S rRNA + S-adenosyl-L-methionine = N(7)-methylguanosine(527) in 16S rRNA + S-adenosyl-L-homocysteine. Specifically methylates the N7 position of guanine in position 527 of 16S rRNA. The chain is Ribosomal RNA small subunit methyltransferase G from Magnetococcus marinus (strain ATCC BAA-1437 / JCM 17883 / MC-1).